The primary structure comprises 149 residues: MNKGQRHIKIREIIMSNDIETQDELVDRLREAGFNVTQATVSRDIKEMQLVKVPMANGRYKYSLPSDQRFNPLQKLKRALVDVFIKLDGTGNLLVLRTLPGNAHAIGVLLDNLDWDEIVGTICGDDTCLIICRTPKDAKKVSNQLLSML.

This sequence belongs to the ArgR family. As to quaternary structure, homohexamer.

It localises to the cytoplasm. Its pathway is amino-acid biosynthesis; L-arginine biosynthesis [regulation]. Its function is as follows. Regulates arginine biosynthesis genes. This chain is Arginine repressor (argR), found in Geobacillus stearothermophilus (Bacillus stearothermophilus).